The following is a 171-amino-acid chain: Nudix hydrolase DR_0079 (171 aa).

Positions 32-162 (ERVRVVNAFL…EAAKGDLAEL (131 aa)) constitute a Nudix hydrolase domain. The short motif at 69-91 (GGAVQSGETYEEAFRREAREELN) is the Nudix box element. Residues glutamate 85 and glutamate 89 each contribute to the Mg(2+) site.

This sequence belongs to the Nudix hydrolase family. As to quaternary structure, monomer. The cofactor is Mg(2+).

Inhibited by zinc, calcium or copper ions. Hydrolase that converts various nucleotide triphosphates (NTPs) to the corresponding nucleotide monophosphates and diphosphate, and nucleotide diphosphates to nucleotide monophosphates and inorganic phosphate. Has a marked preference for cytosine ribonucleoside 5'-diphosphate (CDP) and cytosine ribonucleoside 5'-triphosphate (CTP). Has lower activity towards the deoxyribose nucleotides dCDP and dCTP, and towards dGDP, TDP and UDP. The protein is Nudix hydrolase DR_0079 of Deinococcus radiodurans (strain ATCC 13939 / DSM 20539 / JCM 16871 / CCUG 27074 / LMG 4051 / NBRC 15346 / NCIMB 9279 / VKM B-1422 / R1).